The sequence spans 497 residues: Sestrin homolog (497 aa).

2 positions are modified to phosphoserine: S185 and S190. A compositionally biased stretch (polar residues) spans 226 to 241 (NANPDYDSQTAASSNG). The disordered stretch occupies residues 226 to 255 (NANPDYDSQTAASSNGGAPPDSANAVADGP).

This sequence belongs to the sestrin family. Associates with the GATOR2 complex; the interaction is probably direct. Associates with the GATOR1 complex; the interaction is probably indirect and mediated by the GATOR2 complex. In terms of tissue distribution, highly expressed in muscle-enriched tissues (at protein level).

It localises to the nucleus. It is found in the cytoplasm. Functions as a negative feedback regulator of mTOR function. This is Sestrin homolog from Drosophila melanogaster (Fruit fly).